Reading from the N-terminus, the 151-residue chain is Non-specific lipid transfer protein GPI-anchored 30 (151 aa).

The N-terminal stretch at 1-22 (MMMGMKFFSFYVVLLLVAASSG) is a signal peptide. 4 disulfides stabilise this stretch: C32-C69, C39-C53, C54-C97, and C67-C106. N44 carries an N-linked (GlcNAc...) asparagine glycan. S120 carries GPI-anchor amidated serine lipidation. A propeptide spans 121–151 (SSIGNTFSQSYWMTTLAIAATVLSYCHHIIS) (removed in mature form).

Belongs to the plant LTP family. In terms of tissue distribution, expressed in vascular tissues of all organs. Expressed in seedlings, preferentially in hypocotyls and roots. Also observed in siliques.

The protein resides in the cell membrane. Lipid transfer protein that promotes the number of phloem (pro)cambial and pericycle cells. The polypeptide is Non-specific lipid transfer protein GPI-anchored 30 (Arabidopsis thaliana (Mouse-ear cress)).